Here is a 138-residue protein sequence, read N- to C-terminus: Large ribosomal subunit protein bL19 (138 aa).

This sequence belongs to the bacterial ribosomal protein bL19 family.

This protein is located at the 30S-50S ribosomal subunit interface and may play a role in the structure and function of the aminoacyl-tRNA binding site. In Rickettsia conorii (strain ATCC VR-613 / Malish 7), this protein is Large ribosomal subunit protein bL19.